The following is a 159-amino-acid chain: Transcription elongation factor GreA (159 aa).

Residues 47 to 73 (AEYDAAREEQSLTEAHIADLENKLSTA) adopt a coiled-coil conformation.

Belongs to the GreA/GreB family.

Functionally, necessary for efficient RNA polymerase transcription elongation past template-encoded arresting sites. The arresting sites in DNA have the property of trapping a certain fraction of elongating RNA polymerases that pass through, resulting in locked ternary complexes. Cleavage of the nascent transcript by cleavage factors such as GreA or GreB allows the resumption of elongation from the new 3'terminus. GreA releases sequences of 2 to 3 nucleotides. The chain is Transcription elongation factor GreA from Chlorobium phaeobacteroides (strain DSM 266 / SMG 266 / 2430).